A 356-amino-acid chain; its full sequence is Phosphoribosylformylglycinamidine cyclo-ligase (356 aa).

The protein belongs to the AIR synthase family.

The protein resides in the cytoplasm. It carries out the reaction 2-formamido-N(1)-(5-O-phospho-beta-D-ribosyl)acetamidine + ATP = 5-amino-1-(5-phospho-beta-D-ribosyl)imidazole + ADP + phosphate + H(+). It functions in the pathway purine metabolism; IMP biosynthesis via de novo pathway; 5-amino-1-(5-phospho-D-ribosyl)imidazole from N(2)-formyl-N(1)-(5-phospho-D-ribosyl)glycinamide: step 2/2. This chain is Phosphoribosylformylglycinamidine cyclo-ligase, found in Desulfotalea psychrophila (strain LSv54 / DSM 12343).